The chain runs to 80 residues: RNA-binding protein Hfq (80 aa).

Positions 10–69 (DPFLNALRKEHVPVSIYLVNGIKLQGNIESFDQYVVLLRNTVTQMVYKHAISTVVPARPV) constitute a Sm domain.

The protein belongs to the Hfq family. Homohexamer.

In terms of biological role, RNA chaperone that binds small regulatory RNA (sRNAs) and mRNAs to facilitate mRNA translational regulation in response to envelope stress, environmental stress and changes in metabolite concentrations. Also binds with high specificity to tRNAs. In Burkholderia ambifaria (strain ATCC BAA-244 / DSM 16087 / CCUG 44356 / LMG 19182 / AMMD) (Burkholderia cepacia (strain AMMD)), this protein is RNA-binding protein Hfq.